We begin with the raw amino-acid sequence, 932 residues long: UPF0182 protein Dred_1797 (932 aa).

Helical transmembrane passes span 11 to 31, 53 to 73, 118 to 138, 180 to 200, 209 to 229, 264 to 284, and 292 to 312; these read LVIL…GLYI, IGLR…NLML, LTLA…SSVA, ILAS…LVTD, IFRF…FFVI, YKAL…NIFL, and YAIG…PAII. The disordered stretch occupies residues 861 to 883; that stretch reads DRPQQGVPPATDQPAGQQPAPEK.

This sequence belongs to the UPF0182 family.

The protein localises to the cell membrane. The sequence is that of UPF0182 protein Dred_1797 from Desulforamulus reducens (strain ATCC BAA-1160 / DSM 100696 / MI-1) (Desulfotomaculum reducens).